The following is a 306-amino-acid chain: Acetyl-coenzyme A carboxylase carboxyl transferase subunit beta (306 aa).

Residues 25–294 (VWTKCDSCGQ…PQDPLPHEPR (270 aa)) form the CoA carboxyltransferase N-terminal domain. Residues Cys29, Cys32, Cys48, and Cys51 each contribute to the Zn(2+) site. Residues 29–51 (CDSCGQVLYRAELERNLEVCPKC) form a C4-type zinc finger. The tract at residues 281–306 (NRPQPQDPLPHEPRPDAVPEDHQDEV) is disordered. Basic and acidic residues predominate over residues 289 to 306 (LPHEPRPDAVPEDHQDEV).

It belongs to the AccD/PCCB family. Acetyl-CoA carboxylase is a heterohexamer composed of biotin carboxyl carrier protein (AccB), biotin carboxylase (AccC) and two subunits each of ACCase subunit alpha (AccA) and ACCase subunit beta (AccD). Zn(2+) serves as cofactor.

The protein resides in the cytoplasm. It carries out the reaction N(6)-carboxybiotinyl-L-lysyl-[protein] + acetyl-CoA = N(6)-biotinyl-L-lysyl-[protein] + malonyl-CoA. Its pathway is lipid metabolism; malonyl-CoA biosynthesis; malonyl-CoA from acetyl-CoA: step 1/1. Its function is as follows. Component of the acetyl coenzyme A carboxylase (ACC) complex. Biotin carboxylase (BC) catalyzes the carboxylation of biotin on its carrier protein (BCCP) and then the CO(2) group is transferred by the transcarboxylase to acetyl-CoA to form malonyl-CoA. This Sodalis glossinidius (strain morsitans) protein is Acetyl-coenzyme A carboxylase carboxyl transferase subunit beta.